Here is a 481-residue protein sequence, read N- to C-terminus: Cysteine--tRNA ligase (481 aa).

Position 43 (Cys43) interacts with Zn(2+). A 'HIGH' region motif is present at residues 45–55; the sequence is ATVQGLPHIGH. The Zn(2+) site is built by Cys221, His246, and Glu250. A 'KMSKS' region motif is present at residues 277–281; it reads KMSKS. Residue Lys280 coordinates ATP.

This sequence belongs to the class-I aminoacyl-tRNA synthetase family. As to quaternary structure, monomer. Zn(2+) serves as cofactor.

Its subcellular location is the cytoplasm. It carries out the reaction tRNA(Cys) + L-cysteine + ATP = L-cysteinyl-tRNA(Cys) + AMP + diphosphate. This chain is Cysteine--tRNA ligase, found in Mycobacterium sp. (strain JLS).